Here is a 305-residue protein sequence, read N- to C-terminus: Glycine--tRNA ligase alpha subunit (305 aa).

It belongs to the class-II aminoacyl-tRNA synthetase family. Tetramer of two alpha and two beta subunits.

It localises to the cytoplasm. It carries out the reaction tRNA(Gly) + glycine + ATP = glycyl-tRNA(Gly) + AMP + diphosphate. The polypeptide is Glycine--tRNA ligase alpha subunit (Streptococcus mutans serotype c (strain ATCC 700610 / UA159)).